The following is a 407-amino-acid chain: Serine/threonine transporter SstT (407 aa).

9 helical membrane-spanning segments follow: residues 11–31 (IIHGSLVLQIIVGIALAVILA), 43–63 (FLGDFFVGALKAIAPILVFVL), 82–102 (IISLYLIGTFAAALTAVLLSF), 141–161 (ALMTGNYIGILAWGIGLGIAL), 192–212 (LGIFGLVAGTVAATGFDALAG), 216–236 (LLMVLVGAMLIMALVVNPLIV), 298–318 (MGGAAITITVLTLAAAHTLGV), 339–359 (ASGVAGGSLLLIPLACSLFGI), and 363–383 (IAMQVVAVGFIIGVVQDSAET).

This sequence belongs to the dicarboxylate/amino acid:cation symporter (DAACS) (TC 2.A.23) family.

It localises to the cell inner membrane. It carries out the reaction L-serine(in) + Na(+)(in) = L-serine(out) + Na(+)(out). The catalysed reaction is L-threonine(in) + Na(+)(in) = L-threonine(out) + Na(+)(out). Its function is as follows. Involved in the import of serine and threonine into the cell, with the concomitant import of sodium (symport system). In Shewanella denitrificans (strain OS217 / ATCC BAA-1090 / DSM 15013), this protein is Serine/threonine transporter SstT.